A 299-amino-acid chain; its full sequence is Dermonecrotic toxin LiSicTox-alphaIVA1 (299 aa).

Residues 1-18 (MLFPTALIFGCWALVIEG) form the signal peptide. His30 is an active-site residue. Positions 50 and 52 each coordinate Mg(2+). His66 functions as the Nucleophile in the catalytic mechanism. 2 disulfides stabilise this stretch: Cys70-Cys76 and Cys72-Cys217. Mg(2+) is bound at residue Asp110.

It belongs to the arthropod phospholipase D family. Class II subfamily. Class IIa sub-subfamily. Mg(2+) serves as cofactor. Expressed by the venom gland.

Its subcellular location is the secreted. It catalyses the reaction an N-(acyl)-sphingosylphosphocholine = an N-(acyl)-sphingosyl-1,3-cyclic phosphate + choline. It carries out the reaction an N-(acyl)-sphingosylphosphoethanolamine = an N-(acyl)-sphingosyl-1,3-cyclic phosphate + ethanolamine. The enzyme catalyses a 1-acyl-sn-glycero-3-phosphocholine = a 1-acyl-sn-glycero-2,3-cyclic phosphate + choline. The catalysed reaction is a 1-acyl-sn-glycero-3-phosphoethanolamine = a 1-acyl-sn-glycero-2,3-cyclic phosphate + ethanolamine. Functionally, dermonecrotic toxins cleave the phosphodiester linkage between the phosphate and headgroup of certain phospholipids (sphingolipid and lysolipid substrates), forming an alcohol (often choline) and a cyclic phosphate. This toxin acts on sphingomyelin (SM) with high activity. It may also act on ceramide phosphoethanolamine (CPE), lysophosphatidylcholine (LPC) and lysophosphatidylethanolamine (LPE), but not on lysophosphatidylserine (LPS), and lysophosphatidylglycerol (LPG). It acts by transphosphatidylation, releasing exclusively cyclic phosphate products as second products. Has hemolytic activity in human erythrocytes in a dose-dependent manner. In vivo, this toxin induces dermonecrosis, edema, hemorrhage, massive inflammatory response, as well as vascular permeability. In addition, thrombus formation has also been detected in dermal blood vessels. It also induces platelet aggregation. It is noteworthy that a Glu-248 replaces the Asp present in paralogs, without decrease in catalytic and hemolytic activities. The sequence is that of Dermonecrotic toxin LiSicTox-alphaIVA1 from Loxosceles intermedia (Brown spider).